A 391-amino-acid polypeptide reads, in one-letter code: MPRSDYLFTSESVSEGHPDKVSDRISDTVVDAYLSAMPEARLGVETLTTTNRVVIAGEVRGPDSVTFKDLEELTREAVRDIGYEQSGFHWKNNDVAIHLHAQSADIAQGVDAAGNKDEGAGDQGIMFGYAADETPALMPAPIFYAHKILKDLADARKAKQGDAAKLGPDAKSQVTVRYANGRPVEVTQIVLSTQHLDESLDSADVRAIVEPYILKALPQGWVNEGTVWHVNPTGKFVIGGPDGDAGLTGRKIIVDTYGGAAPHGGGAFSGKDPTKVDRSAAYAARYLAKNVVAAGLARRATIQLSYAIGVAKPLSIYVDLHGTGTVDEAKLETVLMDALDLSPRGIRTALQLNKPIYARTSAYGHFGREPDADGGFSWEKTDLADKLKSAF.

The disordered stretch occupies residues 1–20; that stretch reads MPRSDYLFTSESVSEGHPDK. Histidine 17 is a binding site for ATP. Aspartate 19 is a binding site for Mg(2+). K(+) is bound at residue glutamate 45. L-methionine-binding residues include glutamate 58 and glutamine 102. The interval 102 to 112 is flexible loop; that stretch reads QSADIAQGVDA. Residues 169–171, 235–236, aspartate 244, 250–251, alanine 267, and lysine 271 each bind ATP; these read DAK, KF, and RK. Position 244 (aspartate 244) interacts with L-methionine. An L-methionine-binding site is contributed by lysine 275.

It belongs to the AdoMet synthase family. Homotetramer; dimer of dimers. Requires Mg(2+) as cofactor. The cofactor is K(+).

The protein localises to the cytoplasm. The catalysed reaction is L-methionine + ATP + H2O = S-adenosyl-L-methionine + phosphate + diphosphate. The protein operates within amino-acid biosynthesis; S-adenosyl-L-methionine biosynthesis; S-adenosyl-L-methionine from L-methionine: step 1/1. Functionally, catalyzes the formation of S-adenosylmethionine (AdoMet) from methionine and ATP. The overall synthetic reaction is composed of two sequential steps, AdoMet formation and the subsequent tripolyphosphate hydrolysis which occurs prior to release of AdoMet from the enzyme. This is S-adenosylmethionine synthase from Methylorubrum extorquens (strain CM4 / NCIMB 13688) (Methylobacterium extorquens).